A 131-amino-acid polypeptide reads, in one-letter code: Aspartate 1-decarboxylase (131 aa).

Residue Ser25 is the Schiff-base intermediate with substrate; via pyruvic acid of the active site. Pyruvic acid (Ser) is present on Ser25. A substrate-binding site is contributed by Thr57. Tyr58 functions as the Proton donor in the catalytic mechanism. 73-75 (GAA) lines the substrate pocket.

The protein belongs to the PanD family. Heterooctamer of four alpha and four beta subunits. It depends on pyruvate as a cofactor. Is synthesized initially as an inactive proenzyme, which is activated by self-cleavage at a specific serine bond to produce a beta-subunit with a hydroxyl group at its C-terminus and an alpha-subunit with a pyruvoyl group at its N-terminus.

It is found in the cytoplasm. The catalysed reaction is L-aspartate + H(+) = beta-alanine + CO2. Its pathway is cofactor biosynthesis; (R)-pantothenate biosynthesis; beta-alanine from L-aspartate: step 1/1. Catalyzes the pyruvoyl-dependent decarboxylation of aspartate to produce beta-alanine. The sequence is that of Aspartate 1-decarboxylase from Chlorobium phaeobacteroides (strain DSM 266 / SMG 266 / 2430).